The following is a 245-amino-acid chain: Carbohydrate deacetylase (245 aa).

Positions 59 and 125 each coordinate Mg(2+).

The protein belongs to the YdjC deacetylase family. Homodimer. Mg(2+) serves as cofactor.

Its function is as follows. Probably catalyzes the deacetylation of acetylated carbohydrates an important step in the degradation of oligosaccharides. In Listeria welshimeri serovar 6b (strain ATCC 35897 / DSM 20650 / CCUG 15529 / CIP 8149 / NCTC 11857 / SLCC 5334 / V8), this protein is Carbohydrate deacetylase.